Consider the following 1009-residue polypeptide: Protein-tyrosine kinase 2-beta (1009 aa).

In terms of domain architecture, FERM spans 39–359 (RILKVCFYSN…GYCRLQGEHK (321 aa)). A phosphoserine mark is found at Ser-361, Ser-375, and Ser-399. Tyr-402 is modified (phosphotyrosine; by autocatalysis). The region spanning 425-683 (VVLNRILGEG…ELVCSLSDIY (259 aa)) is the Protein kinase domain. Residues 431–439 (LGEGFFGEV), Lys-457, and 503–509 (ELYPYGE) contribute to the ATP site. The Proton acceptor role is filled by Asp-549. Phosphotyrosine is present on Tyr-579. Tyr-580 carries the post-translational modification Phosphotyrosine; by SRC, FYN and LCK. Residues 696-728 (NARYRPPKILEPTTFQEPPPKPSRPKYRPPPQT) are disordered. Residues 712–727 (EPPPKPSRPKYRPPPQ) show a composition bias toward pro residues. Tyr-722 bears the Phosphotyrosine mark. Phosphoserine is present on Ser-762. Thr-765 carries the post-translational modification Phosphothreonine. The interval 801–1009 (KIKMKQVLER…VANLAHPPAE (209 aa)) is interaction with TGFB1I1. Tyr-834 is modified (phosphotyrosine). A Phosphoserine modification is found at Ser-839. Residue Thr-842 is modified to Phosphothreonine. Position 849 is a phosphotyrosine (Tyr-849). The residue at position 866 (Ser-866) is a Phosphoserine. A focal adhesion targeting (FAT) region spans residues 868 to 1009 (QPTANLDRTD…VANLAHPPAE (142 aa)). Tyr-881 is subject to Phosphotyrosine.

The protein belongs to the protein kinase superfamily. Tyr protein kinase family. FAK subfamily. In terms of assembly, homodimer, or homooligomer. Interacts with KCNA2. Interacts with NPHP1, ASAP1, ASAP2, ARHGAP26, SKAP2 and TGFB1I1. The Tyr-402 phosphorylated form interacts with SRC (via SH2 domain) and SRC family members. Forms a signaling complex with EPHA1, LCK and phosphatidylinositol 3-kinase; upon activation by EFNA1. Interacts with GRB2 (via SH2 domain). Interacts with P53/TP53 and MDM2. Interacts with MYLK. Interacts with BCAR1. Interacts with RB1CC1. Interacts with RHOU. Interacts with VAV1. Interacts with PDPK1. Interacts with DLG4. Interacts with LPXN and PTPN12. Interacts with SIRPA and SH2D3C. Interacts (hypophosphorylated) with PXN. Interacts with ARHGAP10. Phosphorylated on tyrosine residues in response to various stimuli that elevate the intracellular calcium concentration; this activation is indirect and may be mediated by production of reactive oxygen species (ROS). Tyr-402 is the major autophosphorylation site, but other kinases can also phosphorylate Tyr-402. Autophosphorylation occurs in trans, i.e. one subunit of the dimeric receptor phosphorylates tyrosine residues on the other subunit. Phosphorylation at Tyr-402 promotes interaction with SRC and SRC family members, leading to phosphorylation at Tyr-579; Tyr-580 and Tyr-881. Phosphorylation at Tyr-881 is important for interaction with GRB2. Phosphorylated on tyrosine residues upon activation of FGR and PKC. Recruitment by NPHP1 to cell matrix adhesions initiates Tyr-402 phosphorylation. In monocytes, adherence to substrata is required for tyrosine phosphorylation and kinase activation. Angiotensin II, thapsigargin and L-alpha-lysophosphatidic acid (LPA) also induce autophosphorylation and increase kinase activity. Phosphorylation by MYLK promotes ITGB2 activation and is thus essential to trigger neutrophil transmigration during lung injury. Dephosphorylated by PTPN12.

It localises to the cytoplasm. The protein resides in the perinuclear region. It is found in the cell membrane. Its subcellular location is the cell junction. The protein localises to the focal adhesion. It localises to the cell projection. The protein resides in the lamellipodium. It is found in the cell cortex. Its subcellular location is the nucleus. The enzyme catalyses L-tyrosyl-[protein] + ATP = O-phospho-L-tyrosyl-[protein] + ADP + H(+). With respect to regulation, activated in response to stimuli that lead to increased intracellular Ca(2+) levels; this activation is indirect and may be mediated by calcium-mediated production of reactive oxygen species (ROS). Activated by autophosphorylation at Tyr-402; this creates a binding site for SRC family kinases and leads to phosphorylation at additional tyrosine residues. Phosphorylation at Tyr-402, Tyr-579 and Tyr-580 is required for optimal kinase activity. Functionally, non-receptor protein-tyrosine kinase that regulates reorganization of the actin cytoskeleton, cell polarization, cell migration, adhesion, spreading and bone remodeling. Plays a role in the regulation of the humoral immune response, and is required for normal levels of marginal B-cells in the spleen and normal migration of splenic B-cells. Required for normal macrophage polarization and migration towards sites of inflammation. Regulates cytoskeleton rearrangement and cell spreading in T-cells, and contributes to the regulation of T-cell responses. Promotes osteoclastic bone resorption; this requires both PTK2B/PYK2 and SRC. May inhibit differentiation and activity of osteoprogenitor cells. Functions in signaling downstream of integrin and collagen receptors, immune receptors, G-protein coupled receptors (GPCR), cytokine, chemokine and growth factor receptors, and mediates responses to cellular stress. Forms multisubunit signaling complexes with SRC and SRC family members upon activation; this leads to the phosphorylation of additional tyrosine residues, creating binding sites for scaffold proteins, effectors and substrates. Regulates numerous signaling pathways. Promotes activation of phosphatidylinositol 3-kinase and of the AKT1 signaling cascade. Promotes activation of NOS3. Regulates production of the cellular messenger cGMP. Promotes activation of the MAP kinase signaling cascade, including activation of MAPK1/ERK2, MAPK3/ERK1 and MAPK8/JNK1. Promotes activation of Rho family GTPases, such as RHOA and RAC1. Recruits the ubiquitin ligase MDM2 to P53/TP53 in the nucleus, and thereby regulates P53/TP53 activity, P53/TP53 ubiquitination and proteasomal degradation. Acts as a scaffold, binding to both PDPK1 and SRC, thereby allowing SRC to phosphorylate PDPK1 at 'Tyr-9, 'Tyr-373', and 'Tyr-376'. Promotes phosphorylation of NMDA receptors by SRC family members, and thereby contributes to the regulation of NMDA receptor ion channel activity and intracellular Ca(2+) levels. May also regulate potassium ion transport by phosphorylation of potassium channel subunits. Phosphorylates SRC; this increases SRC kinase activity. Phosphorylates ASAP1, NPHP1, KCNA2 and SHC1. Promotes phosphorylation of ASAP2, RHOU and PXN; this requires both SRC and PTK2/PYK2. This chain is Protein-tyrosine kinase 2-beta (Ptk2b), found in Mus musculus (Mouse).